We begin with the raw amino-acid sequence, 382 residues long: Cytochrome b (382 aa).

4 helical membrane passes run 36–56 (FGSL…FLTM), 80–101 (WLIR…YLHI), 116–136 (WFIG…GYVL), and 181–201 (FYTF…IHLL). H86 and H100 together coordinate heme b. 2 residues coordinate heme b: H185 and H199. Residue H204 coordinates a ubiquinone. The next 4 membrane-spanning stretches (helical) occupy residues 229 to 249 (YKDL…TLSN), 291 to 311 (LGGV…PLTF), 323 to 343 (INQF…WIGA), and 350 to 370 (YIIT…LNPL).

This sequence belongs to the cytochrome b family. As to quaternary structure, the main subunits of complex b-c1 are: cytochrome b, cytochrome c1 and the Rieske protein. The cofactor is heme b.

The protein localises to the mitochondrion inner membrane. In terms of biological role, component of the ubiquinol-cytochrome c reductase complex (complex III or cytochrome b-c1 complex) that is part of the mitochondrial respiratory chain. The b-c1 complex mediates electron transfer from ubiquinol to cytochrome c. Contributes to the generation of a proton gradient across the mitochondrial membrane that is then used for ATP synthesis. The sequence is that of Cytochrome b (MT-CYB) from Samia ricini (Indian eri silkmoth).